We begin with the raw amino-acid sequence, 214 residues long: Reticulon-3-B (214 aa).

Residues 1–22 form a disordered region; that stretch reads MAETSGPQSSHISSSSAGDKGS. Positions 26-214 constitute a Reticulon domain; the sequence is VRDLLYWRDV…LPGALKKKSE (189 aa). The next 2 membrane-spanning stretches (helical) occupy residues 46–66 and 150–170; these read MVLL…YLVL and TYIG…LLAF.

Homodimer.

The protein resides in the endoplasmic reticulum membrane. It is found in the golgi apparatus membrane. Its function is as follows. May be involved in membrane trafficking in the early secretory pathway. The protein is Reticulon-3-B (rtn3-b) of Xenopus laevis (African clawed frog).